We begin with the raw amino-acid sequence, 272 residues long: 3-methyl-2-oxobutanoate hydroxymethyltransferase (272 aa).

Residues D43 and D82 each contribute to the Mg(2+) site. 3-methyl-2-oxobutanoate-binding positions include 43-44, D82, and K112; that span reads DS. Position 114 (E114) interacts with Mg(2+). The Proton acceptor role is filled by E179.

It belongs to the PanB family. As to quaternary structure, homodecamer; pentamer of dimers. The cofactor is Mg(2+).

It is found in the cytoplasm. It carries out the reaction 3-methyl-2-oxobutanoate + (6R)-5,10-methylene-5,6,7,8-tetrahydrofolate + H2O = 2-dehydropantoate + (6S)-5,6,7,8-tetrahydrofolate. It functions in the pathway cofactor biosynthesis; (R)-pantothenate biosynthesis; (R)-pantoate from 3-methyl-2-oxobutanoate: step 1/2. Functionally, catalyzes the reversible reaction in which hydroxymethyl group from 5,10-methylenetetrahydrofolate is transferred onto alpha-ketoisovalerate to form ketopantoate. The polypeptide is 3-methyl-2-oxobutanoate hydroxymethyltransferase (Staphylococcus aureus (strain bovine RF122 / ET3-1)).